The chain runs to 851 residues: Glutathione transporter 1 (851 aa).

A compositionally biased stretch (polar residues) spans 1 to 14; sequence MTARNSASIPTSIR. A disordered region spans residues 1 to 116; it reads MTARNSASIP…LDNETDSEVE (116 aa). An N-linked (GlcNAc...) asparagine glycan is attached at N32. Over residues 33–68 the composition is skewed to low complexity; the sequence is LSTKTASKTSLTFRQSSSDESTSSYSGNHHNINIQH. Residues 74–92 are compositionally biased toward polar residues; sequence FRTNSSSFSPNDYSISESP. N77 carries N-linked (GlcNAc...) asparagine glycosylation. S93 carries the phosphoserine modification. Residues 105–134 adopt a coiled-coil conformation; that stretch reads VQLDNETDSEVESEVEELERELEAIEDSVY. N-linked (GlcNAc...) asparagine glycosylation is present at N109. The next 2 membrane-spanning stretches (helical) occupy residues 156 to 176 and 179 to 199; these read TWVLTTIFVIVFAAVNQFFSL and PALSISFIVAQLILFPLGKLL. N-linked (GlcNAc...) asparagine glycosylation is present at N256. Helical transmembrane passes span 259–279, 282–302, 333–353, and 405–425; these read WGYKILIVLTSQMLGYGFAGL, RWIVYPAAMIWPQTLVSTVLF, FFAYVMIGSFVFYWFPGFIFK, and WVICNTFGSVVLIFWIVVPIL. N-linked (GlcNAc...) asparagine glycans are attached at residues N452 and N464. A run of 5 helical transmembrane segments spans residues 480 to 500, 531 to 551, 560 to 580, 592 to 612, and 642 to 662; these read YSMSTALNFAAVTAIFTHCAL, APQWWYATLFIVVFGLTIFTV, VWALIVALLIFIVNFIPQGVL, IITELIGGYILPGKPLANLMI, and ILFFVQLFATILGGITQVAVQ. A glycan (N-linked (GlcNAc...) asparagine) is linked at N691. 3 consecutive transmembrane segments (helical) span residues 711–731, 757–777, and 791–811; these read YYPLIFFFLIGAVAPFITWGL, PATGINYSSWAIVGFIFNYVI, and VLAAAMDSGVAVAGVVIFLCV. N843 is a glycosylation site (N-linked (GlcNAc...) asparagine).

This sequence belongs to the oligopeptide OPT transporter family.

It localises to the endoplasmic reticulum membrane. The protein resides in the cell membrane. High-affinity glutathione transporter which plays a role in scavenging glutathione from the extracellular environment for the maintenance of sulfur homeostasis. The chain is Glutathione transporter 1 (pgt1) from Schizosaccharomyces pombe (strain 972 / ATCC 24843) (Fission yeast).